Reading from the N-terminus, the 260-residue chain is Neuraminyllactose-binding hemagglutinin (260 aa).

The signal sequence occupies residues 1–27 (MKANNHFKDFAWKKCLLGASVVALLVG). A lipid anchor (N-palmitoyl cysteine) is attached at cysteine 28. Cysteine 28 carries S-diacylglycerol cysteine lipidation.

The protein resides in the cell outer membrane. This chain is Neuraminyllactose-binding hemagglutinin (hpaA), found in Helicobacter pylori (strain ATCC 700392 / 26695) (Campylobacter pylori).